The chain runs to 1578 residues: Pentafunctional AROM polypeptide (1578 aa).

A 3-dehydroquinate synthase region spans residues 1–384 (MAEPTKIKIL…YEPKASVVPN (384 aa)). NAD(+)-binding positions include 44-46 (DTN), 81-84 (EVSK), 114-116 (GGV), and Asp119. A 7-phospho-2-dehydro-3-deoxy-D-arabino-heptonate-binding site is contributed by Arg130. Position 139-140 (139-140 (TT)) interacts with NAD(+). 2 residues coordinate 7-phospho-2-dehydro-3-deoxy-D-arabino-heptonate: Asp146 and Lys152. Lys161 lines the NAD(+) pocket. Asn162 contributes to the 7-phospho-2-dehydro-3-deoxy-D-arabino-heptonate binding site. NAD(+)-binding positions include 179 to 182 (FLET) and Asn190. Glu194 provides a ligand contact to Zn(2+). 7-phospho-2-dehydro-3-deoxy-D-arabino-heptonate-binding positions include 194-197 (EVIK) and Lys250. Glu260 acts as the Proton acceptor; for 3-dehydroquinate synthase activity in catalysis. 7-phospho-2-dehydro-3-deoxy-D-arabino-heptonate contacts are provided by residues 264 to 268 (RNLLN) and His271. His271 lines the Zn(2+) pocket. Catalysis depends on His275, which acts as the Proton acceptor; for 3-dehydroquinate synthase activity. Residues His287 and Lys356 each contribute to the 7-phospho-2-dehydro-3-deoxy-D-arabino-heptonate site. His287 provides a ligand contact to Zn(2+). The interval 397–842 (VHPGVEPASN…WDTLRQKFSA (446 aa)) is EPSP synthase. The For EPSP synthase activity role is filled by Cys824. Residues 864-1055 (TASVFIIGMR…KRKKHSFFVS (192 aa)) are shikimate kinase. Position 871–878 (871–878 (GMRGAGKT)) interacts with ATP. Residues 1056 to 1276 (LTLPDLRTAG…AAPGQLSATE (221 aa)) are 3-dehydroquinase. The active-site Proton acceptor; for 3-dehydroquinate dehydratase activity is the His1179. The active-site Schiff-base intermediate with substrate; for 3-dehydroquinate dehydratase activity is Lys1207. A shikimate dehydrogenase region spans residues 1289-1578 (QKKFAVFGTP…EDARAAVLSS (290 aa)).

In the N-terminal section; belongs to the sugar phosphate cyclases superfamily. Dehydroquinate synthase family. This sequence in the 2nd section; belongs to the EPSP synthase family. The protein in the 3rd section; belongs to the shikimate kinase family. It in the 4th section; belongs to the type-I 3-dehydroquinase family. In the C-terminal section; belongs to the shikimate dehydrogenase family. Homodimer. It depends on Zn(2+) as a cofactor.

It is found in the cytoplasm. It catalyses the reaction 7-phospho-2-dehydro-3-deoxy-D-arabino-heptonate = 3-dehydroquinate + phosphate. The catalysed reaction is 3-dehydroquinate = 3-dehydroshikimate + H2O. The enzyme catalyses shikimate + NADP(+) = 3-dehydroshikimate + NADPH + H(+). It carries out the reaction shikimate + ATP = 3-phosphoshikimate + ADP + H(+). It catalyses the reaction 3-phosphoshikimate + phosphoenolpyruvate = 5-O-(1-carboxyvinyl)-3-phosphoshikimate + phosphate. Its pathway is metabolic intermediate biosynthesis; chorismate biosynthesis; chorismate from D-erythrose 4-phosphate and phosphoenolpyruvate: step 2/7. It participates in metabolic intermediate biosynthesis; chorismate biosynthesis; chorismate from D-erythrose 4-phosphate and phosphoenolpyruvate: step 3/7. The protein operates within metabolic intermediate biosynthesis; chorismate biosynthesis; chorismate from D-erythrose 4-phosphate and phosphoenolpyruvate: step 4/7. It functions in the pathway metabolic intermediate biosynthesis; chorismate biosynthesis; chorismate from D-erythrose 4-phosphate and phosphoenolpyruvate: step 5/7. Its pathway is metabolic intermediate biosynthesis; chorismate biosynthesis; chorismate from D-erythrose 4-phosphate and phosphoenolpyruvate: step 6/7. In terms of biological role, the AROM polypeptide catalyzes 5 consecutive enzymatic reactions in prechorismate polyaromatic amino acid biosynthesis. The protein is Pentafunctional AROM polypeptide of Aspergillus flavus (strain ATCC 200026 / FGSC A1120 / IAM 13836 / NRRL 3357 / JCM 12722 / SRRC 167).